Here is a 139-residue protein sequence, read N- to C-terminus: Ribonuclease P protein component (139 aa).

The protein belongs to the RnpA family. In terms of assembly, consists of a catalytic RNA component (M1 or rnpB) and a protein subunit.

It catalyses the reaction Endonucleolytic cleavage of RNA, removing 5'-extranucleotides from tRNA precursor.. In terms of biological role, RNaseP catalyzes the removal of the 5'-leader sequence from pre-tRNA to produce the mature 5'-terminus. It can also cleave other RNA substrates such as 4.5S RNA. The protein component plays an auxiliary but essential role in vivo by binding to the 5'-leader sequence and broadening the substrate specificity of the ribozyme. The protein is Ribonuclease P protein component of Paraburkholderia xenovorans (strain LB400).